Here is a 100-residue protein sequence, read N- to C-terminus: MEKRDFKEQLKKTAHLARLYLTPEEEELYAKQLQDILDYFKKLQEVDTSNIEPMAHVLSLSNIWREDEPKGSISQEEAFKNAPEIENLGFKIPRIIKREE.

Belongs to the GatC family. In terms of assembly, heterotrimer of A, B and C subunits.

The enzyme catalyses L-glutamyl-tRNA(Gln) + L-glutamine + ATP + H2O = L-glutaminyl-tRNA(Gln) + L-glutamate + ADP + phosphate + H(+). The catalysed reaction is L-aspartyl-tRNA(Asn) + L-glutamine + ATP + H2O = L-asparaginyl-tRNA(Asn) + L-glutamate + ADP + phosphate + 2 H(+). Functionally, allows the formation of correctly charged Asn-tRNA(Asn) or Gln-tRNA(Gln) through the transamidation of misacylated Asp-tRNA(Asn) or Glu-tRNA(Gln) in organisms which lack either or both of asparaginyl-tRNA or glutaminyl-tRNA synthetases. The reaction takes place in the presence of glutamine and ATP through an activated phospho-Asp-tRNA(Asn) or phospho-Glu-tRNA(Gln). The chain is Aspartyl/glutamyl-tRNA(Asn/Gln) amidotransferase subunit C from Dictyoglomus turgidum (strain DSM 6724 / Z-1310).